Reading from the N-terminus, the 223-residue chain is Cytidylate kinase (223 aa).

10-18 (GPAGSGKSS) is a binding site for ATP.

It belongs to the cytidylate kinase family. Type 1 subfamily.

It localises to the cytoplasm. The enzyme catalyses CMP + ATP = CDP + ADP. It catalyses the reaction dCMP + ATP = dCDP + ADP. The sequence is that of Cytidylate kinase from Pseudothermotoga lettingae (strain ATCC BAA-301 / DSM 14385 / NBRC 107922 / TMO) (Thermotoga lettingae).